The chain runs to 524 residues: G1/S-specific cyclin-E (524 aa).

The tract at residues 1 to 155 is disordered; that stretch reads MAGRKSSRTA…EESHEMVRLE (155 aa). A compositionally biased stretch (basic and acidic residues) spans 18–47; the sequence is KPERKSAILSPHDELRERLLETAIDMKENI. Over residues 48–62 the composition is skewed to polar residues; that stretch reads PQRNTRNSSVGSQKS. Basic and acidic residues-rich tracts occupy residues 63-78, 86-95, and 146-155; these read DCSETRKRRSTKEGPA, KHRNGSREDS, and EESHEMVRLE.

It belongs to the cyclin family. Cyclin E subfamily. In terms of assembly, interacts with a member of the CDK2/CDK protein kinases to form a serine/threonine kinase holoenzyme complex. The cyclin subunit imparts substrate specificity to the complex. In terms of tissue distribution, expressed dynamically in proliferating cells throughout development. Detectable in larval blast cells undergoing active proliferation that give rise to all tissue types, including germline, intestine, hypodermis, neurons, and muscle.

The protein resides in the nucleus. The protein localises to the cytoplasm. It localises to the cytoskeleton. Its subcellular location is the microtubule organizing center. It is found in the centrosome. The protein resides in the centriole. In terms of biological role, essential for the control of the cell cycle at the G1/S (start) transition. In association with cdk-2, regulates proliferation, quiescent state and cell fate during the development of several cell lineages. In the embryo, initiates the establishment of cell polarity through the recruitment of the centrosomal proteins spd-2 and spd-5 during prophase. During the development of the vulva, controls the onset of vulval cell terminal differentiation by controlling the duration of G1 phase. During hypoderm development at early larval stages, controls syncytial fate of seam cell daughter cells. Involved in the progression of cell division in the intestinal lineage in larvae, and in particular in endoreplication, a specific growth pathway in the intestinal epithelium, required for feeding and gut development in growing larvae. By controlling the activity of translational repressor gld-1, regulates the pool of germline stem cells and the size of the mitotic zone by preventing entry into meiosis. In addition, repression of expression by gld-1 prevents mitosis re-entry in meiotic germline cells. This Caenorhabditis elegans protein is G1/S-specific cyclin-E.